The primary structure comprises 402 residues: Putative F-box protein At4g22180 (402 aa).

In terms of domain architecture, F-box spans 18 to 64 (PNSWSELPLDLLTAVFERLSYANFQRAKSVCSSWHSGSRQSVPIQIP).

The protein is Putative F-box protein At4g22180 of Arabidopsis thaliana (Mouse-ear cress).